The primary structure comprises 138 residues: Basic phospholipase A2 homolog Ts-K49a (138 aa).

The first 16 residues, 1–16 (MRTLWIMAVLLLGVEG), serve as a signal peptide directing secretion. Disulfide bonds link C42/C131, C44/C60, C59/C111, C65/C138, C66/C104, C73/C97, and C91/C102. Residues 121–133 (KKKKINLKLFCKK) are important for membrane-damaging activities in eukaryotes and bacteria; heparin-binding.

As to expression, expressed by the venom gland.

The protein localises to the secreted. Its function is as follows. Snake venom phospholipase A2 homolog that lacks catalytic activity. It shows myotoxic and weak anticoagulant activities and induces local edema a few hours after injection (5-10 ug) in the hind paw. A model of myotoxic mechanism has been proposed: an apo Lys49-PLA2 is activated by the entrance of a hydrophobic molecule (e.g. fatty acid) at the hydrophobic channel of the protein leading to a reorientation of a monomer. This reorientation causes a transition between 'inactive' to 'active' states, causing alignment of C-terminal and membrane-docking sites (MDoS) side-by-side and putting the membrane-disruption sites (MDiS) in the same plane, exposed to solvent and in a symmetric position for both monomers. The MDoS region stabilizes the toxin on membrane by the interaction of charged residues with phospholipid head groups. Subsequently, the MDiS region destabilizes the membrane with penetration of hydrophobic residues. This insertion causes a disorganization of the membrane, allowing an uncontrolled influx of ions (i.e. calcium and sodium), and eventually triggering irreversible intracellular alterations and cell death. The polypeptide is Basic phospholipase A2 homolog Ts-K49a (Trimeresurus stejnegeri (Chinese green tree viper)).